Consider the following 271-residue polypeptide: N-acetyltransferase ECO1 (271 aa).

Residues 1–38 (MKTYRAKRKYLSESEDDVFSSSPTQSPETSPLQPPNES) are disordered. Over residues 20–31 (SSSPTQSPETSP) the composition is skewed to low complexity. The CCHH-type zinc finger occupies 80–104 (TTCKTCGMTYQVAYGPDISAHKSFH).

This sequence belongs to the acetyltransferase family. ECO subfamily.

The protein resides in the nucleus. Probable acetyltransferase required for the establishment of sister chromatid cohesion and couple the processes of cohesion and DNA replication to ensure that only sister chromatids become paired together. In contrast to the structural cohesins, the deposition and establishment factors are required only during S phase. Acts by acetylating the cohesin complex component SMC3. The polypeptide is N-acetyltransferase ECO1 (ECO1) (Yarrowia lipolytica (strain CLIB 122 / E 150) (Yeast)).